The following is a 230-amino-acid chain: UPF0173 metal-dependent hydrolase MK1542 (230 aa).

It belongs to the UPF0173 family.

The protein is UPF0173 metal-dependent hydrolase MK1542 of Methanopyrus kandleri (strain AV19 / DSM 6324 / JCM 9639 / NBRC 100938).